Reading from the N-terminus, the 490-residue chain is Glutamyl-tRNA(Gln) amidotransferase subunit A (490 aa).

Residues lysine 77 and serine 152 each act as charge relay system in the active site. Catalysis depends on serine 176, which acts as the Acyl-ester intermediate.

Belongs to the amidase family. GatA subfamily. As to quaternary structure, heterotrimer of A, B and C subunits.

It carries out the reaction L-glutamyl-tRNA(Gln) + L-glutamine + ATP + H2O = L-glutaminyl-tRNA(Gln) + L-glutamate + ADP + phosphate + H(+). In terms of biological role, allows the formation of correctly charged Gln-tRNA(Gln) through the transamidation of misacylated Glu-tRNA(Gln) in organisms which lack glutaminyl-tRNA synthetase. The reaction takes place in the presence of glutamine and ATP through an activated gamma-phospho-Glu-tRNA(Gln). In Limosilactobacillus reuteri (strain DSM 20016) (Lactobacillus reuteri), this protein is Glutamyl-tRNA(Gln) amidotransferase subunit A.